The sequence spans 435 residues: MSEGPKGLAIAAPASGSGKTTLTLGLLRALTRRGLRVQPFKNGPDYIDPAFHAAAAGRASFNLDGWAMDRPQLHALAGQAAGADLVIFEGAMGLYDGPADPGRSGRGTSAEIARMFGWPVVLVLDVKGQGQSAAATALGFARHPEAPPLAGVILNHVASPRHEAMIRAEMDRLGLRVLGALPRRSDLSLPERHLGLVQAEEQAGLEATLEALADFVAAHVDLEALLSVAGAGPAPGAGAWAVPPAGRIALARDAAFSFVYPHMLEAWRRAGVTVLPFSPLADQAPDPSADLVWLPGGYPELHAGRIAAATRFKAGLRAFAETRSVHGECGGYMVLGARLVDAEGRAHAMAGLLGLVTSYEKRRLHLGYRSADLLAPLPGYGAGSRLYGHEFHYSTILEQPDAPLAKVCDAAGAPVAETGSVRGHVTGSFFHLIAG.

The 189-residue stretch at 247–435 (RIALARDAAF…TGSFFHLIAG (189 aa)) folds into the GATase cobBQ-type domain. Residue cysteine 329 is the Nucleophile of the active site.

This sequence belongs to the CobB/CbiA family. Requires Mg(2+) as cofactor.

It carries out the reaction hydrogenobyrinate + 2 L-glutamine + 2 ATP + 2 H2O = hydrogenobyrinate a,c-diamide + 2 L-glutamate + 2 ADP + 2 phosphate + 2 H(+). It participates in cofactor biosynthesis; adenosylcobalamin biosynthesis; cob(II)yrinate a,c-diamide from precorrin-2 (aerobic route): step 9/10. In terms of biological role, catalyzes the ATP-dependent amidation of the two carboxylate groups at positions a and c of hydrogenobyrinate, using either L-glutamine or ammonia as the nitrogen source. In Rhodobacter capsulatus (strain ATCC BAA-309 / NBRC 16581 / SB1003), this protein is Hydrogenobyrinate a,c-diamide synthase.